The chain runs to 113 residues: U11-theraphotoxin-Hhn1g (113 aa).

Positions 1–21 (MNTVRVTFLLVFVLAVSLGQA) are cleaved as a signal peptide. Positions 22-74 (DKDENRMEMQEKTEQGKSYLDFAENLLLQKLEELEAKLLEEDSEESRNSRQKR) are excised as a propeptide. The interval 61-83 (EEDSEESRNSRQKRCIGEGVPCD) is disordered. 3 cysteine pairs are disulfide-bonded: cysteine 75–cysteine 90, cysteine 82–cysteine 95, and cysteine 89–cysteine 110.

Belongs to the neurotoxin 14 (magi-1) family. 01 (HNTX-16) subfamily. Expressed by the venom gland.

The protein resides in the secreted. Its function is as follows. Probable ion channel inhibitor. This Cyriopagopus hainanus (Chinese bird spider) protein is U11-theraphotoxin-Hhn1g.